The primary structure comprises 180 residues: Major urinary protein 17 (180 aa).

The first 18 residues, 1 to 18 (MKMLLLLCLGLTLVCVHA), serve as a signal peptide directing secretion. A disulfide bridge links Cys-82 with Cys-175.

This sequence belongs to the calycin superfamily. Lipocalin family. Because of their involvement in the coordination of social behavior, Mup proteins are thought to exhibit variable expression depending upon gender, age and status of the studied individuals. Expression may also be strain-specific: in strains C57BL/6J and 129S7, transcriptional support is lacking for Mup17.

It is found in the secreted. Its function is as follows. Major urinary proteins (Mups) bind pheromones, thus stabilize them and allow slow release into the air from urine marks. May protect pheromones from oxidation. May also act as pheromones themselves. In this context, they play a role in the regulation of social behaviors, such as aggression, mating, pup-suckling, territory establishment and dominance. The polypeptide is Major urinary protein 17 (Mup17) (Mus musculus (Mouse)).